A 134-amino-acid chain; its full sequence is Nif-regulating protein A (134 aa).

The C4-type; atypical zinc-finger motif lies at 3–36 (CLECGLVYIVSGLKVPEKISVRVFVNRIEHPFTH).

In terms of assembly, interacts with the general archaeal transcription factors TBPs.

Functionally, involved in nitrogen regulation. Enhances the transcription of the nitrogen fixation (nif) operon under nitrogen-limited conditions. Acts by binding to the nifH promoter region. This Methanosarcina mazei (strain ATCC BAA-159 / DSM 3647 / Goe1 / Go1 / JCM 11833 / OCM 88) (Methanosarcina frisia) protein is Nif-regulating protein A.